We begin with the raw amino-acid sequence, 754 residues long: Endothelin-converting enzyme 1 (754 aa).

Residues 1–52 are Cytoplasmic-facing; sequence MMSTYKRATLDEEDLVDSLSESDVYPNHLQVNFRGPRNGQRCWAARTPVEKR. At Thr-9 the chain carries Phosphothreonine. The helical; Signal-anchor for type II membrane protein transmembrane segment at 53–73 threads the bilayer; that stretch reads LVVLVALLAAALVACLAVLGI. Topologically, residues 74 to 754 are extracellular; sequence QYQTRTPSVC…MNPHHKCEVW (681 aa). The region spanning 82-754 is the Peptidase M13 domain; sequence VCLSEACISV…MNPHHKCEVW (673 aa). 5 cysteine pairs are disulfide-bonded: Cys-83–Cys-88, Cys-106–Cys-739, Cys-114–Cys-699, Cys-169–Cys-419, and Cys-628–Cys-751. N-linked (GlcNAc...) asparagine glycans are attached at residues Asn-150, Asn-171, Asn-194, Asn-254, Asn-300, Asn-346, Asn-367, and Asn-523. His-591 is a Zn(2+) binding site. Glu-592 is an active-site residue. A Zn(2+)-binding site is contributed by His-595. N-linked (GlcNAc...) asparagine glycosylation is found at Asn-616 and Asn-635. Glu-651 contributes to the Zn(2+) binding site. The Proton donor role is filled by Asp-655.

This sequence belongs to the peptidase M13 family. Homodimer; disulfide-linked. Interacts with PPP1R16B. Interacts with TSPAN8; this interaction recruits the endothelin converting enzyme ECE1 to tetraspanin-enriched microdomains and positively modulates its enzymatic activity. Zn(2+) serves as cofactor.

It localises to the cell membrane. It catalyses the reaction Hydrolysis of the 21-Trp-|-Val-22 bond in big endothelin to form endothelin 1.. Its activity is regulated as follows. Inhibited by phosphoramidon. Functionally, converts big endothelin-1 to endothelin-1. In Bos taurus (Bovine), this protein is Endothelin-converting enzyme 1 (ECE1).